The following is a 274-amino-acid chain: Bis(5'-nucleosyl)-tetraphosphatase, symmetrical (274 aa).

This sequence belongs to the Ap4A hydrolase family.

It carries out the reaction P(1),P(4)-bis(5'-adenosyl) tetraphosphate + H2O = 2 ADP + 2 H(+). In terms of biological role, hydrolyzes diadenosine 5',5'''-P1,P4-tetraphosphate to yield ADP. This is Bis(5'-nucleosyl)-tetraphosphatase, symmetrical from Shewanella sp. (strain MR-4).